We begin with the raw amino-acid sequence, 177 residues long: ATP synthase subunit delta (177 aa).

It belongs to the ATPase delta chain family. F-type ATPases have 2 components, F(1) - the catalytic core - and F(0) - the membrane proton channel. F(1) has five subunits: alpha(3), beta(3), gamma(1), delta(1), epsilon(1). F(0) has three main subunits: a(1), b(2) and c(10-14). The alpha and beta chains form an alternating ring which encloses part of the gamma chain. F(1) is attached to F(0) by a central stalk formed by the gamma and epsilon chains, while a peripheral stalk is formed by the delta and b chains.

It is found in the cell inner membrane. Functionally, f(1)F(0) ATP synthase produces ATP from ADP in the presence of a proton or sodium gradient. F-type ATPases consist of two structural domains, F(1) containing the extramembraneous catalytic core and F(0) containing the membrane proton channel, linked together by a central stalk and a peripheral stalk. During catalysis, ATP synthesis in the catalytic domain of F(1) is coupled via a rotary mechanism of the central stalk subunits to proton translocation. Its function is as follows. This protein is part of the stalk that links CF(0) to CF(1). It either transmits conformational changes from CF(0) to CF(1) or is implicated in proton conduction. This chain is ATP synthase subunit delta, found in Neisseria gonorrhoeae (strain NCCP11945).